The chain runs to 248 residues: SEELSFSFTKFKTDQKNLILQRDALITPTGKLQLTTVENGKPAAYSLGRALYSTPIHIWDKSTGDEASFATFFSFVISDAPNPSTAATDGLAFFLAPADTQPQSAGGYLGLFEKDSSYNSSNQIVAVEFDTYYNSAWDPQTNPHIGIDVNTIKSKKVSSWGFKNGNVATVLITYQPSSKSLVASLVYPSGQTSDKTSYIISANVDLKATVPEWVRIGFSATTGQTDNYIETHDILSWSFKSKLPATKN.

N-linked (GlcNAc...) asparagine; partial glycosylation is present at Asn-119. Mn(2+) is bound by residues Glu-128 and Asp-130. Ca(2+) is bound by residues Asp-130, Tyr-132, Asn-134, and Asp-138. 2 residues coordinate Mn(2+): Asp-138 and His-144.

The protein belongs to the leguminous lectin family.

In Cytisus scoparius (Scotch broom), this protein is 2-acetamido-2-deoxy-D-galactose-binding seed lectin 2.